Consider the following 24-residue polypeptide: VTSWSLCTPGCTSPGGGSNCSFCC.

T2 is subject to (E)-2,3-didehydrobutyrine. Positions 3–7 (SWSLC) form a cross-link, lanthionine (Ser-Cys). W4 bears the 6'-chlorotryptophan mark. Residue S5 is modified to 2,3-didehydroalanine (Ser). The beta-methyllanthionine (Thr-Cys) cross-link spans 8-11 (TPGC). Cross-links (lanthionine (Ser-Cys)) lie at residues 13-20 (SPGGGSNC) and 18-23 (SNCSFC). At P14 the chain carries 3,4-dihydroxyproline; in form A1. 4-hydroxyproline; in form A2 is present on P14. Residues 21–24 (SFCC) constitute a cross-link (S-(2-aminovinyl)-D-cysteine (Ser-Cys)).

Belongs to the type A lantibiotic family. In terms of processing, maturation of lantibiotics involves the enzymatic conversion of Thr, and Ser into dehydrated AA and the formation of thioether bonds with cysteine. The C-terminal lanthionine undergoes decarboxylation. This is followed by membrane translocation and cleavage of the modified precursor. Post-translationally, occurs in 2 forms, A1 contains 3,4-dihydroxyproline at Pro-14, A2 contains 4-hydroxyproline at Pro-14. The patent report does not provide the stereochemistry of the modified prolines. The patent report does not describe whether the 2,3-didehydrobutyrine is the E- or Z-isomer. In several diagrams it is shown as the E-isomer.

Lanthionine-containing peptide antibiotic (lantibiotic) active on Gram-positive bacteria. The bactericidal activity of lantibiotics is based on depolarization of energized bacterial cytoplasmic membranes, initiated by the formation of aqueous transmembrane pores. The polypeptide is Lantibiotic 107891 (Microbispora sp. (strain 107891)).